A 392-amino-acid polypeptide reads, in one-letter code: Queuine tRNA-ribosyltransferase (392 aa).

D93 acts as the Proton acceptor in catalysis. Residues D93–Y97, D147, Q189, and G216 contribute to the substrate site. The interval G247–D253 is RNA binding. D266 serves as the catalytic Nucleophile. Residues T271–R275 are RNA binding; important for wobble base 34 recognition. C304, C306, C309, and H335 together coordinate Zn(2+).

Belongs to the queuine tRNA-ribosyltransferase family. As to quaternary structure, homodimer. Within each dimer, one monomer is responsible for RNA recognition and catalysis, while the other monomer binds to the replacement base PreQ1. Zn(2+) is required as a cofactor.

The enzyme catalyses 7-aminomethyl-7-carbaguanine + guanosine(34) in tRNA = 7-aminomethyl-7-carbaguanosine(34) in tRNA + guanine. The protein operates within tRNA modification; tRNA-queuosine biosynthesis. Catalyzes the base-exchange of a guanine (G) residue with the queuine precursor 7-aminomethyl-7-deazaguanine (PreQ1) at position 34 (anticodon wobble position) in tRNAs with GU(N) anticodons (tRNA-Asp, -Asn, -His and -Tyr). Catalysis occurs through a double-displacement mechanism. The nucleophile active site attacks the C1' of nucleotide 34 to detach the guanine base from the RNA, forming a covalent enzyme-RNA intermediate. The proton acceptor active site deprotonates the incoming PreQ1, allowing a nucleophilic attack on the C1' of the ribose to form the product. After dissociation, two additional enzymatic reactions on the tRNA convert PreQ1 to queuine (Q), resulting in the hypermodified nucleoside queuosine (7-(((4,5-cis-dihydroxy-2-cyclopenten-1-yl)amino)methyl)-7-deazaguanosine). The sequence is that of Queuine tRNA-ribosyltransferase from Dehalococcoides mccartyi (strain CBDB1).